Consider the following 300-residue polypeptide: Porphobilinogen deaminase (300 aa).

Cys-239 is modified (S-(dipyrrolylmethanemethyl)cysteine).

The protein belongs to the HMBS family. Monomer. The cofactor is dipyrromethane.

It carries out the reaction 4 porphobilinogen + H2O = hydroxymethylbilane + 4 NH4(+). It participates in porphyrin-containing compound metabolism; protoporphyrin-IX biosynthesis; coproporphyrinogen-III from 5-aminolevulinate: step 2/4. Tetrapolymerization of the monopyrrole PBG into the hydroxymethylbilane pre-uroporphyrinogen in several discrete steps. The chain is Porphobilinogen deaminase from Francisella tularensis subsp. holarctica (strain OSU18).